The chain runs to 802 residues: Phenylalanine--tRNA ligase beta subunit (802 aa).

Residues 40–149 (RPELDFVKIV…EGAEIGKTIR (110 aa)) enclose the tRNA-binding domain. One can recognise a B5 domain in the interval 407–484 (HKEVRIHTDI…RTRGYDTIQV (78 aa)). Mg(2+) is bound by residues aspartate 462, aspartate 468, glutamate 471, and glutamate 472. One can recognise an FDX-ACB domain in the interval 710 to 802 (SQFPEAEIDI…LAGKNGFVLR (93 aa)).

It belongs to the phenylalanyl-tRNA synthetase beta subunit family. Type 1 subfamily. In terms of assembly, tetramer of two alpha and two beta subunits. It depends on Mg(2+) as a cofactor.

The protein localises to the cytoplasm. The enzyme catalyses tRNA(Phe) + L-phenylalanine + ATP = L-phenylalanyl-tRNA(Phe) + AMP + diphosphate + H(+). This is Phenylalanine--tRNA ligase beta subunit from Leptospira borgpetersenii serovar Hardjo-bovis (strain L550).